The chain runs to 293 residues: Diaminopimelate epimerase (293 aa).

Substrate-binding residues include N15, Q47, and N67. The active-site Proton donor is the C76. Residues 77-78 (GN), N163, N197, and 215-216 (ER) each bind substrate. C224 acts as the Proton acceptor in catalysis. Residue 225-226 (GS) coordinates substrate.

This sequence belongs to the diaminopimelate epimerase family. As to quaternary structure, homodimer.

It localises to the cytoplasm. The enzyme catalyses (2S,6S)-2,6-diaminopimelate = meso-2,6-diaminopimelate. The protein operates within amino-acid biosynthesis; L-lysine biosynthesis via DAP pathway; DL-2,6-diaminopimelate from LL-2,6-diaminopimelate: step 1/1. Functionally, catalyzes the stereoinversion of LL-2,6-diaminopimelate (L,L-DAP) to meso-diaminopimelate (meso-DAP), a precursor of L-lysine and an essential component of the bacterial peptidoglycan. The protein is Diaminopimelate epimerase of Chelativorans sp. (strain BNC1).